A 4776-amino-acid polypeptide reads, in one-letter code: Pneumococcal serine-rich repeat protein (4776 aa).

Positions 1–72 are cleaved as a signal peptide; it reads MTETVEDKVS…VVLGTISTSN (72 aa). O-linked (GlcNAc...) serine glycosylation is found at Ser73, Ser75, Ser76, Ser78, Ser80, Ser82, Ser94, Ser100, Ser108, Ser110, Ser118, Ser120, and Ser121. The tract at residues 73–121 is serine-rich repeat region 1, SRR1; sequence SASSTSLSASESASTSASESASTSASTSASTSASESASTSASTSISASS. The interval 86–112 is disordered; that stretch reads STSASESASTSASTSASTSASESASTS. Residues 122–166 form a self aggregating domain region; the sequence is TVVGSQTAAATEATAKKVEEDRKKPASDYVASVTNVNLQSYAKRR. The segment at 122–394 is basic region, BR; it reads TVVGSQTAAA…QSKSLSVSAS (273 aa). Residues 164 to 168 carry the Host furin cleavage recognition motif; sequence KRRKR. A keratin 10-binding domain, cell-type specific binding to lung-derived cells region spans residues 273 to 341; that stretch reads TQTMLTLGSD…GYGLTSSWTV (69 aa). A serine-rich repeat region 2, SRR2 region spans residues 395 to 4712; sequence QSASASASTS…ASTSASASAS (4318 aa). Disordered stretches follow at residues 481 to 627, 861 to 889, 925 to 965, 1052 to 1085, 1123 to 1153, 1171 to 1199, 1311 to 1357, 1671 to 1731, 1792 to 1863, 2105 to 2133, 2169 to 2209, 2296 to 2329, 2367 to 2397, 2415 to 2443, 2571 to 2631, 2737 to 2805, 2855 to 3113, 3347 to 3375, 3411 to 3451, 3538 to 3571, 3609 to 3639, 3657 to 3685, 3797 to 3843, 4167 to 4197, 4215 to 4243, 4355 to 4401, and 4706 to 4747; these read ASTS…STSA, ASAS…SAST, ASAS…SASA, SAST…SASA, ASAS…STSA, ASES…SAST, ASES…SESA, SASE…STSA, ESAS…STSA, and SASA…GTES. Positions 4715–4747 are enriched in polar residues; it reads VSNSANHSNSQVGNTSGSTGKSQKELPNTGTES. Positions 4740–4744 match the LPXTG sorting signal motif; it reads LPNTG. A Pentaglycyl murein peptidoglycan amidated threonine modification is found at Thr4743. Residues 4744–4776 constitute a propeptide, removed by sortase; sequence GTESSIGSVLLGVLAAVTGIGLVAKRRKRDEEE.

It belongs to the serine-rich repeat protein (SRRP) family. Binds to human and mouse protein keratin 10 (KRT10). Post-translationally, glycosylated. Only truncated substrates greater than 25 residues long are glycosylated by the Gtf1-Gtf2 complex in vitro; only Ser residues have been seen to be glycosylated. Based on electrophoretic mobility it is probable that most of the Ser residues in SSR1 and SSR2 are O-GlcNAcylated. Subsequent glycosylation by up to 7 sugar transferases (Gtf3 and GlyAT, GlyB, GlyD, GlyE, GlyF and GlyG) is able to generate very high sugar polymorphism. In terms of processing, can be cleaved by human furin protease; this fragment contributes to self-aggregation and possibly biofilm formation in vitro.

It localises to the secreted. The protein localises to the cell wall. The protein resides in the cell surface. In terms of biological role, protein that allows bacteria to adhere to mammalian host cells. Required for full virulence in mouse infection models when infected intranasally. Required for adhesion to host cells in vitro and for persistence in the lower respiratory tract. Binds host keratin 10 (KRT10) on lung cells which mediates adhesion via the C-terminus of the basic region (BR, residues 273-341); glycosylation of either protein is not required for the interaction. A region in the N-terminus (residues 122-166) self aggregates, contributing to mature biofilm formation. The basic region (BR, residues 187-385) also self aggregates; the BR binds DNA which enhances self aggregation. This Streptococcus pneumoniae serotype 4 (strain ATCC BAA-334 / TIGR4) protein is Pneumococcal serine-rich repeat protein.